The chain runs to 333 residues: Complement C1q and tumor necrosis factor-related protein 9A (333 aa).

Residues 1–19 form the signal peptide; the sequence is MRIWWLLLAIEICTGNINS. 3 Collagen-like domains span residues 24-82, 95-154, and 155-191; these read RQGH…DGKV, GSPG…PGPM, and GPIG…GEKG. A disordered region spans residues 24–188; the sequence is RQGHPGIPGN…GIRGWKGDRG (165 aa). Positions 26–40 are enriched in low complexity; it reads GHPGIPGNPGHNGLP. Pro31, Pro34, and Pro40 each carry 4-hydroxyproline. Positions 42–57 are enriched in basic and acidic residues; the sequence is RDGRDGAKGDKGDAGE. Residues Pro58, Pro61, and Pro64 each carry the 4-hydroxyproline modification. A compositionally biased stretch (basic and acidic residues) spans 69–88; it reads TSGEKGERGADGKVEAKGIK. A 5-hydroxylysine mark is found at Lys73 and Lys127. O-linked (Gal...) hydroxylysine glycosylation is found at Lys73 and Lys127. 3 positions are modified to 4-hydroxyproline: Pro151, Pro160, and Pro175. The C1q domain maps to 197-333; that stretch reads LVLPKSAFTV…FTGFLLFSSP (137 aa).

As to quaternary structure, multimers (predominantly trimers). Interacts with ADIPOQ via the C1q domain to form a heterotrimeric complex. Interacts with CTRP9B. Forms heterotrimers and heterooligomeric complexes with CTRP9B. In terms of tissue distribution, expressed predominantly in adipose tissue.

The protein localises to the secreted. Its function is as follows. Probable adipokine. Activates AMPK, AKT, and p44/42 MAPK signaling pathways. In Homo sapiens (Human), this protein is Complement C1q and tumor necrosis factor-related protein 9A (C1QTNF9).